Consider the following 203-residue polypeptide: Large ribosomal subunit protein uL18 (203 aa).

The protein belongs to the universal ribosomal protein uL18 family. In terms of assembly, part of the 50S ribosomal subunit. Contacts the 5S and 23S rRNAs.

Functionally, this is one of the proteins that bind and probably mediate the attachment of the 5S RNA into the large ribosomal subunit, where it forms part of the central protuberance. This is Large ribosomal subunit protein uL18 from Pyrococcus abyssi (strain GE5 / Orsay).